Reading from the N-terminus, the 511-residue chain is MSDNEGSVPTEGIDYGDTMVVWPSTGRIPGGDVKPGGSSGLAPSMPPGWGDYSPQGIALVQSVLFPGIIRRIILDKELEEGDWSGWSVSVHSPWGNEKVSAARTVLENGLRGGLPEPSRPAAVSFARLEPASGNEQKIIRLMVTQQLEQVTDIPASQLPAAGNNVPVKYRLTDLMQNGTQYMAIIGGIPMTVPVVDAVPVPDRSRPGTNIKDVYSAPVSPNLPDLVLSVGQMNTPVRSNPEIQEDGVISETGNYVEAGYTMSSNNHDVIVRFPEGSGVSPLYISAVEILDSNSLSQRQEAENNAKDDFRVKKEQENDEKTVLTKTSEVIISVGDKVGEYLGDKYKALSREIAENINNFQGKTIRSYDDAMSSINKLMANPSLKINATDKEAIVNAWKAFNAEDMGNKFAALGKTFKAADYAIKANNIREKSIEGYQTGNWGPLMLEVESWVISGMASAVALSLFSLTLGSALIAFGLSATVVGFVGVVIAGAIGAFIDDKFVDELNHKIIK.

The TonB box signature appears at Asp17–Ser24. Helical transmembrane passes span Met455–Phe475 and Leu477–Ile497.

This sequence belongs to the channel forming colicin family.

It is found in the cell membrane. Functionally, this colicin is a channel-forming colicin. This class of transmembrane toxins depolarize the cytoplasmic membrane, leading to dissipation of cellular energy. Its function is as follows. Colicins are polypeptide toxins produced by and active against E.coli and closely related bacteria. This chain is Colicin-B (cba), found in Escherichia coli.